The chain runs to 792 residues: Chloride channel protein CLC-d (792 aa).

Transmembrane regions (helical) follow at residues 78-98 (FFSL…NLSV), 119-139 (AGFI…AYII), 170-190 (RTLI…LALG), 195-215 (LVHT…TKYH), 237-257 (GCAA…LFAL), 267-287 (QLMW…RTAM), 320-340 (LLPM…FNQL), 361-381 (IIEA…LPLL), 451-471 (LLTF…TAVP), 474-494 (QFVP…MFVV), 508-528 (ALLG…SLCV), and 529-549 (IMVE…VLLI). 2 consecutive CBS domains span residues 592 to 652 (QSQK…KVDF) and 704 to 761 (LNPS…SSAV). Residues 731–751 (HLFVVPRPSRVIGLITRKDLL) form a helical membrane-spanning segment.

This sequence belongs to the chloride channel (TC 2.A.49) family. In terms of assembly, homodimer. In terms of tissue distribution, broadly expressed in the plant, but predominantly in the silique.

Its subcellular location is the membrane. Functionally, voltage-gated chloride channel. The chain is Chloride channel protein CLC-d (CLC-D) from Arabidopsis thaliana (Mouse-ear cress).